The chain runs to 463 residues: L-seryl-tRNA(Sec) selenium transferase (463 aa).

N6-(pyridoxal phosphate)lysine is present on K295.

The protein belongs to the SelA family. Homodecamer; pentamer of dimers. Binds only one seryl-tRNA(Sec) per dimer. It depends on pyridoxal 5'-phosphate as a cofactor.

It localises to the cytoplasm. The catalysed reaction is L-seryl-tRNA(Sec) + selenophosphate + H(+) = L-selenocysteinyl-tRNA(Sec) + phosphate. It participates in aminoacyl-tRNA biosynthesis; selenocysteinyl-tRNA(Sec) biosynthesis; selenocysteinyl-tRNA(Sec) from L-seryl-tRNA(Sec) (bacterial route): step 1/1. Converts seryl-tRNA(Sec) to selenocysteinyl-tRNA(Sec) required for selenoprotein biosynthesis. The polypeptide is L-seryl-tRNA(Sec) selenium transferase (Escherichia coli O139:H28 (strain E24377A / ETEC)).